The primary structure comprises 78 residues: Large ribosomal subunit protein uL30 (78 aa).

Positions 58 to 68 (DDTSPDAETGA) are enriched in acidic residues. Positions 58-78 (DDTSPDAETGADLERDGGNRS) are disordered. Basic and acidic residues predominate over residues 69–78 (DLERDGGNRS).

It belongs to the universal ribosomal protein uL30 family. As to quaternary structure, part of the 50S ribosomal subunit.

The sequence is that of Large ribosomal subunit protein uL30 from Roseiflexus sp. (strain RS-1).